Consider the following 107-residue polypeptide: MDLNNRLTEDETLEQAYDIFLELAGDNLDPADILLFNLQFEERGGAELYDPAEDWSEHVDFDLNPDFFAEVVIGLADSDGEPINDVFARVLLCREKDHKLCHILWKE.

It belongs to the putative dsDNA mimic protein family.

Its function is as follows. May act as a double-stranded DNA (dsDNA) mimic. Probably regulates the activity of a dsDNA-binding protein. The sequence is that of Putative double-stranded DNA mimic protein Spro_2690 from Serratia proteamaculans (strain 568).